The following is a 512-amino-acid chain: D-alanine--D-alanyl carrier protein ligase (512 aa).

An ATP-binding site is contributed by 152–153 (TS). D-alanine is bound at residue D199. Residue 294–299 (NAYGPT) participates in ATP binding. V303 contacts D-alanine. ATP-binding positions include D385, 397–400 (YGGR), and K499. A D-alanine-binding site is contributed by K499.

It belongs to the ATP-dependent AMP-binding enzyme family. DltA subfamily.

The protein localises to the cytoplasm. The enzyme catalyses holo-[D-alanyl-carrier protein] + D-alanine + ATP = D-alanyl-[D-alanyl-carrier protein] + AMP + diphosphate. Its pathway is cell wall biogenesis; lipoteichoic acid biosynthesis. Catalyzes the first step in the D-alanylation of lipoteichoic acid (LTA), the activation of D-alanine and its transfer onto the D-alanyl carrier protein (Dcp) DltC. In an ATP-dependent two-step reaction, forms a high energy D-alanyl-AMP intermediate, followed by transfer of the D-alanyl residue as a thiol ester to the phosphopantheinyl prosthetic group of the Dcp. D-alanylation of LTA plays an important role in modulating the properties of the cell wall in Gram-positive bacteria, influencing the net charge of the cell wall. This Streptococcus pyogenes serotype M3 (strain SSI-1) protein is D-alanine--D-alanyl carrier protein ligase.